A 1015-amino-acid polypeptide reads, in one-letter code: MLTALAPPALPGIPRQLPTAPARRQDSSGSSGSYYTAPGSPEPPDVGPDAKGPANWPWVAPGRGAGAQPRLSVSAQNSRQRHGPGSGFPRGPGSGPRPPQPQLRTLPSGEMEVIFGVGPLFGCSGADDREAQQQFTEPAFISPLPPGPASPAAVPRQSQVPDGGSRWATYLELRPRGPSPAAPAQFECVEVALEEGAAPARPRTVPKRQIELRPRPQSPPRAAGAPRPRLLLRTGSLDESLGPLQAAAGFVQTALARKLSPEAPAPSSATFGSTGRSEPETRETARSTHVVLEKAKSRPLRVRDNSAPAKAPRPWPSLRERAIRRDKPAPGTEPLGPVSSSIFLQSEEKIQEARKTRFPREAPDRTVQRARSPPFECRIPSEVPSRAVRPRSPSPPRQTPNGAVRGPRCPSPQNLSPWDRTTRRVSSPLFPEASSEWENQNPAVEETVSRRSPSPPILSQWNQCVAGERSPSLEAPSLWEIPHSAVADAVEPRSSPSPPAFFPWEAPDRPIGTWGPSPQETWDPMGPGSSIAFTQEAQNGLTQEELAPPTPSAPGTPEPTEMQSPSTREISDLAFGGSQQSPEVAAPEPPGSHPVGTLDADKCPEVLGPGEAASGRPRMAIPRPRDVRKLVKTTYAPGFPAGAQGSGLPAPPADPCGEEGGESKTQEPPALGPPAPAHYTSVFIKDFLPVVPHPYEPPEPSFDTVARDASQPNGVLRRRAENSTAKPFKRTEIRLPGALALGRRPEVTSRVRARGPGGENRDVEAQRLVPDGDGRTSPLGGARSSSQRSPVGPAGVRSPRPGSPQMQASPSPGIAPKPKTPPTAPEPAAAVQAPLPREPLALAGRTAPAQPRAASAPPTDRSPQSPSQGARRQPGAAPLGKVLVDPESGRYYFVEAPRQPRLRVLFDPESGQYVEVLLPPSSPGPPHRVYTPLALGLGLYPPAYGPIPSLSLPPSPGPQALGSPQLPWVSEAGPLDGTYYLPVSGTPNPAPPLLLCAPPSSSGPTQPGKGSLFPL.

Disordered regions lie at residues 1 to 111 (MLTA…SGEM), 139 to 164 (AFIS…PDGG), 196 to 236 (GAAP…RTGS), 259 to 460 (LSPE…ILSQ), 488 to 678 (DAVE…APAH), 690 to 883 (VVPH…GKVL), and 991 to 1015 (PPLL…LFPL). Positions 84 to 94 (PGSGFPRGPGS) are enriched in gly residues. Residues 220–233 (PRAAGAPRPRLLLR) show a composition bias toward low complexity. Polar residues predominate over residues 267–276 (SSATFGSTGR). Basic and acidic residues-rich tracts occupy residues 277–304 (SEPE…RVRD), 318–328 (LRERAIRRDKP), and 346–367 (SEEK…DRTV). Residues 380–391 (PSEVPSRAVRPR) show a composition bias toward low complexity. Positions 531–542 (IAFTQEAQNGLT) are enriched in polar residues. 2 stretches are compositionally biased toward pro residues: residues 548–557 (PPTPSAPGTP) and 691–700 (VPHPYEPPEP). Basic and acidic residues predominate over residues 759 to 774 (ENRDVEAQRLVPDGDG). The span at 813–825 (GIAPKPKTPPTAP) shows a compositional bias: pro residues. 2 stretches are compositionally biased toward low complexity: residues 826 to 835 (EPAAAVQAPL) and 847 to 858 (APAQPRAASAPP). Residues 861 to 870 (RSPQSPSQGA) are compositionally biased toward polar residues. Over residues 993–1004 (LLLCAPPSSSGP) the composition is skewed to low complexity.

This is Proline-rich basic protein 1 (PROB1) from Homo sapiens (Human).